A 436-amino-acid chain; its full sequence is UPF0597 protein YhaM (436 aa).

This sequence belongs to the UPF0597 family.

This chain is UPF0597 protein YhaM, found in Escherichia coli (strain K12 / MC4100 / BW2952).